The sequence spans 175 residues: CDP-archaeol synthase (175 aa).

The next 4 helical transmembrane spans lie at 41–61, 82–102, 122–142, and 150–170; these read GLFS…WLSF, LIVV…KSFF, FVVG…VSNF, and VIII…FIGV.

This sequence belongs to the CDP-archaeol synthase family. Mg(2+) is required as a cofactor.

The protein resides in the cell membrane. It carries out the reaction 2,3-bis-O-(geranylgeranyl)-sn-glycerol 1-phosphate + CTP + H(+) = CDP-2,3-bis-O-(geranylgeranyl)-sn-glycerol + diphosphate. It participates in membrane lipid metabolism; glycerophospholipid metabolism. Its function is as follows. Catalyzes the formation of CDP-2,3-bis-(O-geranylgeranyl)-sn-glycerol (CDP-archaeol) from 2,3-bis-(O-geranylgeranyl)-sn-glycerol 1-phosphate (DGGGP) and CTP. This reaction is the third ether-bond-formation step in the biosynthesis of archaeal membrane lipids. This Methanosarcina mazei (strain ATCC BAA-159 / DSM 3647 / Goe1 / Go1 / JCM 11833 / OCM 88) (Methanosarcina frisia) protein is CDP-archaeol synthase.